The following is a 723-amino-acid chain: Malate synthase G (723 aa).

Residues V118, R125 to Y126, S274, and R311 each bind acetyl-CoA. R338 (proton acceptor) is an active-site residue. Residues R338, E427, and G452–D455 contribute to the glyoxylate site. 2 residues coordinate Mg(2+): E427 and D455. Residue P536 participates in acetyl-CoA binding. Position 617 is a cysteine sulfenic acid (-SOH) (C617). Residue D631 is the Proton donor of the active site. Residue C688 is modified to Cysteine sulfenic acid (-SOH).

The protein belongs to the malate synthase family. GlcB subfamily. Monomer. Mg(2+) is required as a cofactor.

The protein resides in the cytoplasm. It carries out the reaction glyoxylate + acetyl-CoA + H2O = (S)-malate + CoA + H(+). Its pathway is carbohydrate metabolism; glyoxylate cycle; (S)-malate from isocitrate: step 2/2. In terms of biological role, involved in the glycolate utilization. Catalyzes the condensation and subsequent hydrolysis of acetyl-coenzyme A (acetyl-CoA) and glyoxylate to form malate and CoA. This Escherichia coli O6:H1 (strain CFT073 / ATCC 700928 / UPEC) protein is Malate synthase G.